Consider the following 429-residue polypeptide: Phosphoribosylamine--glycine ligase (429 aa).

Residues 109–316 form the ATP-grasp domain; that stretch reads KDFLARHHIP…LVELCLAACD (208 aa). Residue 135 to 196 participates in ATP binding; the sequence is LREKGAPIVV…EEFLDGEEAS (62 aa). Residues 209 to 231 are disordered; that stretch reads MATSQDHKRVGENDTGLNTGGMG. Mg(2+)-binding residues include Glu286 and Asn288.

The protein belongs to the GARS family. Requires Mg(2+) as cofactor. The cofactor is Mn(2+).

The enzyme catalyses 5-phospho-beta-D-ribosylamine + glycine + ATP = N(1)-(5-phospho-beta-D-ribosyl)glycinamide + ADP + phosphate + H(+). It functions in the pathway purine metabolism; IMP biosynthesis via de novo pathway; N(1)-(5-phospho-D-ribosyl)glycinamide from 5-phospho-alpha-D-ribose 1-diphosphate: step 2/2. In Pasteurella multocida (strain Pm70), this protein is Phosphoribosylamine--glycine ligase.